Here is a 96-residue protein sequence, read N- to C-terminus: Protein Vpr (96 aa).

Residues 1–42 (MEQAPEDQGPQREPYNEWTLELLEELKSEAVRHFPRIWLHSL) are homooligomerization. Ser-79, Ser-94, and Ser-96 each carry phosphoserine; by host.

This sequence belongs to the HIV-1 VPR protein family. As to quaternary structure, homooligomer, may form homodimer. Interacts with p6-gag region of the Pr55 Gag precursor protein through a (Leu-X-X)4 motif near the C-terminus of the P6gag protein. Interacts with host UNG. May interact with host RAD23A/HHR23A. Interacts with host VPRBP/DCAF1, leading to hijack the CUL4A-RBX1-DDB1-DCAF1/VPRBP complex, mediating ubiquitination of host proteins such as TERT and ZGPAT and arrest of the cell cycle in G2 phase. Post-translationally, phosphorylated on several residues by host. These phosphorylations regulate VPR activity for the nuclear import of the HIV-1 pre-integration complex.

The protein resides in the virion. It localises to the host nucleus. Its subcellular location is the host extracellular space. During virus replication, may deplete host UNG protein, and incude G2-M cell cycle arrest. Acts by targeting specific host proteins for degradation by the 26S proteasome, through association with the cellular CUL4A-DDB1 E3 ligase complex by direct interaction with host VPRPB/DCAF-1. Cell cycle arrest reportedly occurs within hours of infection and is not blocked by antiviral agents, suggesting that it is initiated by the VPR carried into the virion. Additionally, VPR induces apoptosis in a cell cycle dependent manner suggesting that these two effects are mechanistically linked. Detected in the serum and cerebrospinal fluid of AIDS patient, VPR may also induce cell death to bystander cells. In terms of biological role, during virus entry, plays a role in the transport of the viral pre-integration (PIC) complex to the host nucleus. This function is crucial for viral infection of non-dividing macrophages. May act directly at the nuclear pore complex, by binding nucleoporins phenylalanine-glycine (FG)-repeat regions. This is Protein Vpr from Homo sapiens (Human).